An 850-amino-acid polypeptide reads, in one-letter code: Adenylate cyclase (850 aa).

The interval 1 to 535 (MYLYIETLKQ…DISHHFPLRL (535 aa)) is catalytic. The interval 541–850 (KALYSPCEIR…SLPTKQCQLH (310 aa)) is regulatory.

This sequence belongs to the adenylyl cyclase class-1 family.

It localises to the cytoplasm. The catalysed reaction is ATP = 3',5'-cyclic AMP + diphosphate. The regulatory domain is involved in the regulation of cyclase activity by the carbon source. In Yersinia pestis, this protein is Adenylate cyclase (cya).